The sequence spans 318 residues: TATA-box-binding protein (318 aa).

Disordered regions lie at residues 1–21 and 106–138; these read MDQN…QGAM and LTTA…SESS. Composition is skewed to low complexity over residues 106–117 and 125–135; these read LTTAPLPGTTPL and MTPITPATPAS. Tandem repeats lie at residues 144–220 and 234–311. Residues Asn-146, Arg-182, Lys-197, Asn-236, and Arg-273 each contribute to the DNA site.

Belongs to the TBP family. In terms of assembly, binds DNA as monomer. Belongs to the TFIID complex together with the TBP-associated factors (TAFs). Part of a TFIID-containing RNA polymerase II pre-initiation complex that is composed of TBP and at least GTF2A1, GTF2A2, GTF2E1, GTF2E2, GTF2F1, GTF2H2, GTF2H3, GTF2H4, GTF2H5, GTF2B, TCEA1, ERCC2, ERCC3, TAF1, TAF2, TAF3, TAF4, TAF5, TAF6, TAF7, TAF8, TAF9, TAF10, TAF11, TAF12 and TAF13. Component of the transcription factor SL1/TIF-IB complex, composed of TBP and at least TAF1A, TAF1B, TAF1C and TAF1D. Association of TBP to form either TFIID or SL1/TIF-IB appears to be mutually exclusive. Interacts with TAF1A, TAF1B and TAF1C. Interacts with TFIIB, NCOA6, DRAP1, DR1 and ELF3. Interacts with SPIB, SNAPC1, SNAPC2 and SNAPC4. Interacts with UTF1. Interacts with BRF2; this interaction promotes recruitment of BRF2 to TATA box-containing promoters. Interacts with UBTF. Interacts with GPBP1. Interacts with CITED2. Interacts with ATF7IP. Interacts with LLPH. Interacts with HSF1 (via transactivation domain). Interacts with GTF2B (via C-terminus); this interaction with promoter-bound TBP guides RNA polymerase II into the pre-initiation complex (PIC). Interacts with PAX5. Interacts with MSX1; the interaction may inhibit MSX1 autoinactivation. Interacts with MSX3.

The protein resides in the nucleus. General transcription factor that functions at the core of the DNA-binding multiprotein factor TFIID. Binding of TFIID to the TATA box is the initial transcriptional step of the pre-initiation complex (PIC), playing a role in the activation of eukaryotic genes transcribed by RNA polymerase II. Component of a BRF2-containing transcription factor complex that regulates transcription mediated by RNA polymerase III. Component of the transcription factor SL1/TIF-IB complex, which is involved in the assembly of the PIC (pre-initiation complex) during RNA polymerase I-dependent transcription. The rate of PIC formation probably is primarily dependent on the rate of association of SL1 with the rDNA promoter. SL1 is involved in stabilization of nucleolar transcription factor 1/UBTF on rDNA. The sequence is that of TATA-box-binding protein (TBP) from Mesocricetus auratus (Golden hamster).